The sequence spans 60 residues: Large ribosomal subunit protein uL30 (60 aa).

This sequence belongs to the universal ribosomal protein uL30 family. In terms of assembly, part of the 50S ribosomal subunit.

The sequence is that of Large ribosomal subunit protein uL30 from Streptococcus uberis (strain ATCC BAA-854 / 0140J).